Reading from the N-terminus, the 202-residue chain is Dephospho-CoA kinase (202 aa).

The region spanning V4–N201 is the DPCK domain. A12–T17 provides a ligand contact to ATP.

Belongs to the CoaE family.

Its subcellular location is the cytoplasm. It carries out the reaction 3'-dephospho-CoA + ATP = ADP + CoA + H(+). The protein operates within cofactor biosynthesis; coenzyme A biosynthesis; CoA from (R)-pantothenate: step 5/5. In terms of biological role, catalyzes the phosphorylation of the 3'-hydroxyl group of dephosphocoenzyme A to form coenzyme A. The protein is Dephospho-CoA kinase of Vibrio vulnificus (strain CMCP6).